A 91-amino-acid polypeptide reads, in one-letter code: Probable Fe(2+)-trafficking protein (91 aa).

Belongs to the Fe(2+)-trafficking protein family.

Functionally, could be a mediator in iron transactions between iron acquisition and iron-requiring processes, such as synthesis and/or repair of Fe-S clusters in biosynthetic enzymes. In Actinobacillus pleuropneumoniae serotype 5b (strain L20), this protein is Probable Fe(2+)-trafficking protein.